Reading from the N-terminus, the 309-residue chain is uncharacterized protein (309 aa).

Solcar repeat units lie at residues 6–83, 97–211, and 216–302; these read SDLY…LCHS, LTGY…FKRL, and NDKA…VSLL. The next 6 membrane-spanning stretches (helical) occupy residues 12–32, 47–67, 100–120, 184–204, 222–242, and 285–305; these read ITAGSVAAVFQTTMTYPFEYL, IILPQIKSYFVGCSALNVAAF, YNLLIAGTLTGIVESLFIIPF, VQGTTATIFRQIANTSIQFTA, VITGLATSFTLVAMTQPIDVV, and VGISGGLTFTVYEQVSLLLGF.

This sequence belongs to the mitochondrial carrier (TC 2.A.29) family.

The protein localises to the mitochondrion inner membrane. This is an uncharacterized protein from Saccharomyces cerevisiae (strain ATCC 204508 / S288c) (Baker's yeast).